Reading from the N-terminus, the 271-residue chain is Formamidopyrimidine-DNA glycosylase (271 aa).

P2 acts as the Schiff-base intermediate with DNA in catalysis. Residue E3 is the Proton donor of the active site. Catalysis depends on K57, which acts as the Proton donor; for beta-elimination activity. H90, R109, and K151 together coordinate DNA. The FPG-type zinc-finger motif lies at 236–270; it reads HVYGRGSKSCTHCGNLLSEIRLGQRTTVFCGLCQT. R260 serves as the catalytic Proton donor; for delta-elimination activity.

Belongs to the FPG family. Monomer. Zn(2+) serves as cofactor.

It carries out the reaction Hydrolysis of DNA containing ring-opened 7-methylguanine residues, releasing 2,6-diamino-4-hydroxy-5-(N-methyl)formamidopyrimidine.. The catalysed reaction is 2'-deoxyribonucleotide-(2'-deoxyribose 5'-phosphate)-2'-deoxyribonucleotide-DNA = a 3'-end 2'-deoxyribonucleotide-(2,3-dehydro-2,3-deoxyribose 5'-phosphate)-DNA + a 5'-end 5'-phospho-2'-deoxyribonucleoside-DNA + H(+). In terms of biological role, involved in base excision repair of DNA damaged by oxidation or by mutagenic agents. Acts as a DNA glycosylase that recognizes and removes damaged bases. Has a preference for oxidized purines, such as 7,8-dihydro-8-oxoguanine (8-oxoG). Has AP (apurinic/apyrimidinic) lyase activity and introduces nicks in the DNA strand. Cleaves the DNA backbone by beta-delta elimination to generate a single-strand break at the site of the removed base with both 3'- and 5'-phosphates. This is Formamidopyrimidine-DNA glycosylase from Shewanella denitrificans (strain OS217 / ATCC BAA-1090 / DSM 15013).